A 1066-amino-acid polypeptide reads, in one-letter code: Bifunctional cytochrome P450/NADPH--P450 reductase (1066 aa).

The tract at residues 1–480 is cytochrome P450; it reads MAESVPIPEP…LAGNGATSSS (480 aa). Cysteine 407 contributes to the heme binding site. The NADPH-P-450 reductase stretch occupies residues 481 to 1066; that stretch reads THNIKAAANL…NERFATDVFD (586 aa). Residues 500–641 enclose the Flavodoxin-like domain; that stretch reads MAIFYGSNSG…DFEAWEDIVL (142 aa). FMN contacts are provided by residues 506–511, 554–557, cysteine 588, and threonine 596; these read SNSGTC and SYEG. Residues 676 to 904 form the FAD-binding FR-type domain; sequence QDVEEALVVA…RASSEAFHLP (229 aa).

The protein in the N-terminal section; belongs to the cytochrome P450 family. The cofactor is FAD. It depends on FMN as a cofactor. Requires heme as cofactor.

The protein localises to the membrane. The enzyme catalyses an organic molecule + reduced [NADPH--hemoprotein reductase] + O2 = an alcohol + oxidized [NADPH--hemoprotein reductase] + H2O + H(+). The catalysed reaction is 2 oxidized [cytochrome P450] + NADPH = 2 reduced [cytochrome P450] + NADP(+) + H(+). Its activity is regulated as follows. Stimulated NADPH--cytochrome reductase activity in the presence of substrate. Inhibited by fatty acid substrates longer than 13 carbons and the degree of inhibition increases with increasing chain length. Functionally, functions as a fatty acid monooxygenase. Catalyzes hydroxylation of fatty acids at omega-1, omega-2 and omega-3 positions. Shows activity toward fatty acids with a chain length of 9-18 carbons with optimum chain lengths of 12-14 carbons (lauric, tridecylic and myristic acids). Can also use shorter saturated fatty acids with a chain length of 9 or 10 carbons as substrates. Also displays a NADPH-dependent reductase activity in the C-terminal domain, which allows electron transfer from NADPH to the heme iron of the cytochrome P450 N-terminal domain. The sequence is that of Bifunctional cytochrome P450/NADPH--P450 reductase from Fusarium oxysporum (Fusarium vascular wilt).